The chain runs to 120 residues: Ribonuclease P protein component (120 aa).

The protein belongs to the RnpA family. Consists of a catalytic RNA component (M1 or rnpB) and a protein subunit.

It catalyses the reaction Endonucleolytic cleavage of RNA, removing 5'-extranucleotides from tRNA precursor.. Its function is as follows. RNaseP catalyzes the removal of the 5'-leader sequence from pre-tRNA to produce the mature 5'-terminus. It can also cleave other RNA substrates such as 4.5S RNA. The protein component plays an auxiliary but essential role in vivo by binding to the 5'-leader sequence and broadening the substrate specificity of the ribozyme. The protein is Ribonuclease P protein component of Dehalococcoides mccartyi (strain CBDB1).